The sequence spans 309 residues: Cytochrome c1, heme protein, mitochondrial (309 aa).

Residues Met1 to Ala61 constitute a mitochondrion transit peptide. Topologically, residues Met62–Glu262 are mitochondrial intermembrane. Residues Ala88–Pro241 form the Cytochrome c domain. Residues Cys101, Cys104, and His105 each coordinate heme c. Positions Glu131–Glu140 are enriched in acidic residues. A disordered region spans residues Glu131–Ala168. Met225 serves as a coordination point for heme c. The chain crosses the membrane as a helical span at residues His263 to Lys296. The Mitochondrial matrix portion of the chain corresponds to Thr297–Lys309.

The protein belongs to the cytochrome c family. Component of the ubiquinol-cytochrome c oxidoreductase (cytochrome b-c1 complex, complex III, CIII), a multisubunit enzyme composed of 10 subunits. The complex is composed of 3 respiratory subunits cytochrome b (COB), cytochrome c1 (CYT1) and Rieske protein (RIP1), 2 core protein subunits COR1 and QCR2, and 5 low-molecular weight protein subunits QCR6, QCR7, QCR8, QCR9 and QCR10. The complex exists as an obligatory dimer and forms supercomplexes (SCs) in the inner mitochondrial membrane with a monomer or a dimer of cytochrome c oxidase (complex IV, CIV), resulting in 2 different assemblies (supercomplexes III(2)IV and III(2)IV(2)). CYT1 interacts with COX5A at the CIII-CIV interface. The cofactor is heme c.

Its subcellular location is the mitochondrion inner membrane. The catalysed reaction is a quinol + 2 Fe(III)-[cytochrome c](out) = a quinone + 2 Fe(II)-[cytochrome c](out) + 2 H(+)(out). Functionally, component of the ubiquinol-cytochrome c oxidoreductase, a multisubunit transmembrane complex that is part of the mitochondrial electron transport chain which drives oxidative phosphorylation. The respiratory chain contains 3 multisubunit complexes succinate dehydrogenase (complex II, CII), ubiquinol-cytochrome c oxidoreductase (cytochrome b-c1 complex, complex III, CIII) and cytochrome c oxidase (complex IV, CIV), that cooperate to transfer electrons derived from NADH and succinate to molecular oxygen, creating an electrochemical gradient over the inner membrane that drives transmembrane transport and the ATP synthase. The cytochrome b-c1 complex catalyzes electron transfer from ubiquinol to cytochrome c, linking this redox reaction to translocation of protons across the mitochondrial inner membrane, with protons being carried across the membrane as hydrogens on the quinol. In the process called Q cycle, 2 protons are consumed from the matrix, 4 protons are released into the intermembrane space and 2 electrons are passed to cytochrome c. Cytochrome c1 is a catalytic core subunit containing a c-type heme. It transfers electrons from the [2Fe-2S] iron-sulfur cluster of the Rieske protein to cytochrome c. The sequence is that of Cytochrome c1, heme protein, mitochondrial (CYT1) from Saccharomyces cerevisiae (strain ATCC 204508 / S288c) (Baker's yeast).